A 74-amino-acid polypeptide reads, in one-letter code: uncharacterized protein (74 aa).

This is an uncharacterized protein from Escherichia coli (strain K12).